The sequence spans 453 residues: MGIKGLTGLLSENAPKCMKDHEMKTLFGRKVAIDASMSIYQFLIAVRQQDGQMLMNESGDVTSHLMGFFYRTIRMVDHGIKPCYIFDGKPPELKGSVLAKRFARREEAKEGEEEAKETGTAEDVDKLARRQVRVTREHNEECKKLLSLMGIPVVTAPGEAEAQCAELARAGKVYAAGSEDMDTLTFNSPILLRHLTFSEAKKMPISEIHLDVALRDLEMSMDQFIELCILLGCDYLEPCKGIGPKTALKLMREHGTLGKVVEHIRGKMAEKAEEIKAAADEEAEAEAEAEKYDSDPESEEGGETMINSDGEEVPAPSKLKSPKKKAPAKKKKVASSGMQIPEFWPWEEAKQLFMKPDVVNGDDLVLEWKQPDTEGLVEFLCRDKGFNEDRVRAGAAKLSKMLAAKQQGRLDGFFTVKPKEPAAKDTGKGKGKATKGEKRKAEEKGSAKKKSKN.

The N-domain stretch occupies residues 1–105 (MGIKGLTGLL…SVLAKRFARR (105 aa)). Asp34 contributes to the Mg(2+) binding site. DNA contacts are provided by Arg47 and Arg71. Asp87, Glu159, Glu161, Asp180, and Asp182 together coordinate Mg(2+). Positions 123–254 (DVDKLARRQV…KTALKLMREH (132 aa)) are I-domain. Glu159 contacts DNA. DNA is bound by residues Gly232 and Asp234. Mg(2+) is bound at residue Asp234. 2 disordered regions span residues 273–336 (EEIK…VASS) and 409–453 (RLDG…KSKN). Residues 320–333 (KSPKKKAPAKKKKV) are compositionally biased toward basic residues. The segment at 406-414 (QQGRLDGFF) is interaction with PCNA. Residues 417–446 (KPKEPAAKDTGKGKGKATKGEKRKAEEKGS) are compositionally biased toward basic and acidic residues.

It belongs to the XPG/RAD2 endonuclease family. FEN1 subfamily. Interacts with PCNA. Three molecules of FEN1 bind to one PCNA trimer with each molecule binding to one PCNA monomer. PCNA stimulates the nuclease activity without altering cleavage specificity. The cofactor is Mg(2+). Phosphorylated. Phosphorylation upon DNA damage induces relocalization to the nuclear plasma.

Its subcellular location is the nucleus. It localises to the nucleolus. The protein resides in the nucleoplasm. It is found in the mitochondrion. Its function is as follows. Structure-specific nuclease with 5'-flap endonuclease and 5'-3' exonuclease activities involved in DNA replication and repair. During DNA replication, cleaves the 5'-overhanging flap structure that is generated by displacement synthesis when DNA polymerase encounters the 5'-end of a downstream Okazaki fragment. It enters the flap from the 5'-end and then tracks to cleave the flap base, leaving a nick for ligation. Also involved in the long patch base excision repair (LP-BER) pathway, by cleaving within the apurinic/apyrimidinic (AP) site-terminated flap. Acts as a genome stabilization factor that prevents flaps from equilibrating into structures that lead to duplications and deletions. Also possesses 5'-3' exonuclease activity on nicked or gapped double-stranded DNA, and exhibits RNase H activity. Also involved in replication and repair of rDNA and in repairing mitochondrial DNA. In Cryptococcus neoformans var. neoformans serotype D (strain B-3501A) (Filobasidiella neoformans), this protein is Flap endonuclease 1.